Consider the following 237-residue polypeptide: D-aminoacyl-tRNA deacylase (237 aa).

Belongs to the DtdA deacylase family. In terms of assembly, monomer. Zn(2+) is required as a cofactor.

It carries out the reaction a D-aminoacyl-tRNA + H2O = a tRNA + a D-alpha-amino acid + H(+). The enzyme catalyses glycyl-tRNA(Ala) + H2O = tRNA(Ala) + glycine + H(+). In terms of biological role, D-aminoacyl-tRNA deacylase with broad substrate specificity. By recycling D-aminoacyl-tRNA to D-amino acids and free tRNA molecules, this enzyme counteracts the toxicity associated with the formation of D-aminoacyl-tRNA entities in vivo. The sequence is that of D-aminoacyl-tRNA deacylase from Sulfurisphaera tokodaii (strain DSM 16993 / JCM 10545 / NBRC 100140 / 7) (Sulfolobus tokodaii).